The following is a 489-amino-acid chain: uncharacterized protein (489 aa).

T26 bears the Phosphothreonine mark. S27 bears the Phosphoserine mark. 3 helical membrane passes run 63–83 (IVYL…IEFA), 182–202 (LVWS…ILCA), and 221–241 (VFKL…IAFL). Disordered stretches follow at residues 260-312 (PKTS…APLE), 401-435 (STLL…VPPS), and 450-489 (PSIN…PVVH). S263 is modified (phosphoserine). Over residues 268–282 (QRGTSSSQPSENDAN) the composition is skewed to polar residues. Residues 450–465 (PSINNVGGSTAPSVNN) are compositionally biased toward polar residues. Over residues 477-489 (SRSSTLTERPVVH) the composition is skewed to low complexity.

The protein localises to the endoplasmic reticulum membrane. This is an uncharacterized protein from Schizosaccharomyces pombe (strain 972 / ATCC 24843) (Fission yeast).